The primary structure comprises 150 residues: UPF0178 protein PBPRA1738 (150 aa).

Belongs to the UPF0178 family.

The polypeptide is UPF0178 protein PBPRA1738 (Photobacterium profundum (strain SS9)).